We begin with the raw amino-acid sequence, 323 residues long: Ferrochelatase (323 aa).

Fe cation is bound by residues His-196 and Glu-277.

The protein belongs to the ferrochelatase family.

The protein localises to the cytoplasm. It carries out the reaction heme b + 2 H(+) = protoporphyrin IX + Fe(2+). It participates in porphyrin-containing compound metabolism; protoheme biosynthesis; protoheme from protoporphyrin-IX: step 1/1. Catalyzes the ferrous insertion into protoporphyrin IX. The polypeptide is Ferrochelatase (Haemophilus influenzae (strain PittEE)).